The chain runs to 104 residues: Cell cycle protein GpsB (104 aa).

Residues 34–72 (LDVVIQDYEVFQKKIERLEQEIHQLRTEAKRAASERQTR) adopt a coiled-coil conformation. Positions 60 to 71 (TEAKRAASERQT) are enriched in basic and acidic residues. The disordered stretch occupies residues 60–82 (TEAKRAASERQTRHQTSPSVGST). Positions 73-82 (HQTSPSVGST) are enriched in polar residues.

Belongs to the GpsB family. As to quaternary structure, forms polymers through the coiled coil domains. Interacts with PBP1, MreC and EzrA.

It localises to the cytoplasm. Its function is as follows. Divisome component that associates with the complex late in its assembly, after the Z-ring is formed, and is dependent on DivIC and PBP2B for its recruitment to the divisome. Together with EzrA, is a key component of the system that regulates PBP1 localization during cell cycle progression. Its main role could be the removal of PBP1 from the cell pole after pole maturation is completed. Also contributes to the recruitment of PBP1 to the division complex. Not essential for septum formation. The chain is Cell cycle protein GpsB from Halalkalibacterium halodurans (strain ATCC BAA-125 / DSM 18197 / FERM 7344 / JCM 9153 / C-125) (Bacillus halodurans).